A 1155-amino-acid chain; its full sequence is ATP-dependent helicase/deoxyribonuclease subunit B (1155 aa).

The region spanning 1 to 278 (MSQLNAYIGR…FTKQERFENR (278 aa)) is the UvrD-like helicase ATP-binding domain. 9–16 (GRAGTGKS) is an ATP binding site. One can recognise a UvrD-like helicase C-terminal domain in the interval 270-584 (TKQERFENRD…SIGSMDLAKV (315 aa)). [4Fe-4S] cluster-binding residues include C785, C1112, C1115, and C1121.

It belongs to the helicase family. AddB/RexB type 1 subfamily. As to quaternary structure, heterodimer of AddA and AddB. It depends on Mg(2+) as a cofactor. [4Fe-4S] cluster serves as cofactor.

Its function is as follows. The heterodimer acts as both an ATP-dependent DNA helicase and an ATP-dependent, dual-direction single-stranded exonuclease. Recognizes the chi site generating a DNA molecule suitable for the initiation of homologous recombination. The AddB subunit has 5' -&gt; 3' nuclease activity but not helicase activity. The polypeptide is ATP-dependent helicase/deoxyribonuclease subunit B (Staphylococcus carnosus (strain TM300)).